The primary structure comprises 205 residues: Recombination protein RecR (205 aa).

A C4-type zinc finger spans residues 58-75 (CSLCQNVTDKEIDPCNIC). In terms of domain architecture, Toprim spans 83 to 182 (RVVCVVEAPN…KVTRIARGIP (100 aa)).

This sequence belongs to the RecR family.

Its function is as follows. May play a role in DNA repair. It seems to be involved in an RecBC-independent recombinational process of DNA repair. It may act with RecF and RecO. This chain is Recombination protein RecR, found in Chloroherpeton thalassium (strain ATCC 35110 / GB-78).